A 427-amino-acid polypeptide reads, in one-letter code: Glutamate-1-semialdehyde 2,1-aminomutase (427 aa).

Residue lysine 265 is modified to N6-(pyridoxal phosphate)lysine.

The protein belongs to the class-III pyridoxal-phosphate-dependent aminotransferase family. HemL subfamily. As to quaternary structure, homodimer. Pyridoxal 5'-phosphate is required as a cofactor.

It is found in the cytoplasm. The enzyme catalyses (S)-4-amino-5-oxopentanoate = 5-aminolevulinate. The protein operates within porphyrin-containing compound metabolism; protoporphyrin-IX biosynthesis; 5-aminolevulinate from L-glutamyl-tRNA(Glu): step 2/2. The protein is Glutamate-1-semialdehyde 2,1-aminomutase of Shewanella amazonensis (strain ATCC BAA-1098 / SB2B).